The following is a 757-amino-acid chain: uncharacterized protein (757 aa).

The 70-residue stretch at 640 to 709 folds into the S1 motif domain; that stretch reads GMILEGVVSN…ARKRIALTMR (70 aa). The span at 710–741 shows a compositional bias: basic and acidic residues; the sequence is LDDEPGGAKHKMPSENRSRERTAGRKPQRNDR. The disordered stretch occupies residues 710–757; that stretch reads LDDEPGGAKHKMPSENRSRERTAGRKPQRNDRAPANSAMADAFAKLKR.

This is an uncharacterized protein from Neisseria meningitidis serogroup A / serotype 4A (strain DSM 15465 / Z2491).